A 90-amino-acid polypeptide reads, in one-letter code: U7-theraphotoxin-Hhn1c (90 aa).

The first 19 residues, 1–19 (MKTAIFTVVLALAVFAVLS), serve as a signal peptide directing secretion. Residues 20-50 (FGWEANEKALSEEFTELIHEKEAASETEARE) constitute a propeptide that is removed on maturation. Cystine bridges form between Cys-51–Cys-65, Cys-58–Cys-70, and Cys-64–Cys-81.

It belongs to the neurotoxin 10 (Hwtx-1) family. 13 (Hntx-13) subfamily. Expressed by the venom gland.

The protein localises to the secreted. Functionally, ion channel inhibitor. The protein is U7-theraphotoxin-Hhn1c of Cyriopagopus hainanus (Chinese bird spider).